The sequence spans 256 residues: Methylesterase 9 (256 aa).

Residue Ser78 is the Acyl-ester intermediate of the active site. Residues Asp206 and His234 each act as charge relay system in the active site.

This sequence belongs to the AB hydrolase superfamily. Methylesterase family.

The catalysed reaction is methyl (indol-3-yl)acetate + H2O = (indol-3-yl)acetate + methanol + H(+). The enzyme catalyses methyl (-)-jasmonate + H2O = jasmonate + methanol + H(+). It catalyses the reaction methyl salicylate + H2O = salicylate + methanol + H(+). It functions in the pathway plant hormone biosynthesis. The protein operates within lipid metabolism; oxylipin biosynthesis. With respect to regulation, esterase activity is down-regulated by salicylic acid (SA). Its function is as follows. Methylesterase shown to have carboxylesterase activity, methyl indole-3-acetic acid (MeIAA) esterase activity, methyl salicylate (MeSA) esterase activity and methyl jasmonate (MeJA) esterase activity in vitro. Required to convert methyl salicylate (MeSA) to salicylic acid (SA) as part of the signal transduction pathways that activate systemic acquired resistance in systemic tissue. MeSA is believed to be an inactive form that needs to be demethylated to exert a biological effect. This chain is Methylesterase 9, found in Arabidopsis thaliana (Mouse-ear cress).